Reading from the N-terminus, the 248-residue chain is Ribosomal RNA small subunit methyltransferase J (248 aa).

S-adenosyl-L-methionine contacts are provided by residues 97–98 (RD), 113–114 (ER), and aspartate 167.

This sequence belongs to the methyltransferase superfamily. RsmJ family.

It is found in the cytoplasm. It carries out the reaction guanosine(1516) in 16S rRNA + S-adenosyl-L-methionine = N(2)-methylguanosine(1516) in 16S rRNA + S-adenosyl-L-homocysteine + H(+). Functionally, specifically methylates the guanosine in position 1516 of 16S rRNA. The chain is Ribosomal RNA small subunit methyltransferase J from Aeromonas hydrophila subsp. hydrophila (strain ATCC 7966 / DSM 30187 / BCRC 13018 / CCUG 14551 / JCM 1027 / KCTC 2358 / NCIMB 9240 / NCTC 8049).